A 270-amino-acid chain; its full sequence is Putative phosphoenolpyruvate synthase regulatory protein (270 aa).

150-157 (GVSRCGKT) is an ADP binding site.

It belongs to the pyruvate, phosphate/water dikinase regulatory protein family. PSRP subfamily.

The catalysed reaction is [pyruvate, water dikinase] + ADP = [pyruvate, water dikinase]-phosphate + AMP + H(+). It catalyses the reaction [pyruvate, water dikinase]-phosphate + phosphate + H(+) = [pyruvate, water dikinase] + diphosphate. Functionally, bifunctional serine/threonine kinase and phosphorylase involved in the regulation of the phosphoenolpyruvate synthase (PEPS) by catalyzing its phosphorylation/dephosphorylation. This chain is Putative phosphoenolpyruvate synthase regulatory protein, found in Shewanella putrefaciens (strain CN-32 / ATCC BAA-453).